Consider the following 77-residue polypeptide: uncharacterized protein (77 aa).

4Fe-4S ferredoxin-type domains are found at residues 3 to 32 and 36 to 65; these read VEII…WTKD and KYYA…IKVV. Residues Cys12, Cys15, Cys18, Cys22, Cys45, Cys48, Cys51, and Cys55 each coordinate [4Fe-4S] cluster.

[4Fe-4S] cluster is required as a cofactor.

Functionally, ferredoxins are iron-sulfur proteins that transfer electrons probably in the CO-dehydrogenase complex. This is an uncharacterized protein from Methanocaldococcus jannaschii (strain ATCC 43067 / DSM 2661 / JAL-1 / JCM 10045 / NBRC 100440) (Methanococcus jannaschii).